A 229-amino-acid chain; its full sequence is Wtf element wtf14 (229 aa).

The segment covering 1–26 has biased composition (basic and acidic residues); sequence MENNHHLAKDSLDELNPKRGKGEHET. Residues 1 to 27 are disordered; sequence MENNHHLAKDSLDELNPKRGKGEHETQ. A run of 4 helical transmembrane segments spans residues 71–91, 100–120, 151–171, and 188–208; these read IPAVLLPVFVINIALFKYLVF, VLFGLGNGGINIFSMWLLLAT, LYAILKLTFVNAFAIPLLMFF, and VIGVMLNVAYFIIEIENPGLF.

This sequence belongs to the WTF family.

It localises to the endoplasmic reticulum membrane. Functionally, may act in meiotic drive. The protein is Wtf element wtf14 of Schizosaccharomyces pombe (strain 972 / ATCC 24843) (Fission yeast).